Here is a 239-residue protein sequence, read N- to C-terminus: Probable transcriptional regulatory protein CD630_07950 (239 aa).

Belongs to the TACO1 family.

The protein resides in the cytoplasm. The chain is Probable transcriptional regulatory protein CD630_07950 from Clostridioides difficile (strain 630) (Peptoclostridium difficile).